The following is a 416-amino-acid chain: MTEPDSKPKKGRAGRKKAEPVRPPEQFLELAELLDYVGQVIARGVPGGVWVRAEIASLTDRRHLYLDLVQAGEGGAGGVGEVAKCRATVWARERFALEAKFRGATSGATLSAGLKVLLFGTAEFHPQYGFSFNVLDISPEYTLGDAALRLEAMRAELVAEGSYGLNRLLPVPTDFARVAVIAPREAAGLGDFRREADPLEAAGLVEFHYLEATFQGREAGASLLRAVAAARELHQEKALDALFVIRGGGAVTDLAWLNDLELARALATFPAPVVTGLGHARDDTLPDEVACLRTDTPSKAAAYLVRTVVNAAAQAQEAARTIRAEAARVLVEAEAAAAWARDRALSSAVRRVDAAAAEVDALMRQALGLTPQRTLARGYALVRDAAGQPVTRAAGARAGEPLTLEWSDGSVPVRVE.

A disordered region spans residues 1–21 (MTEPDSKPKKGRAGRKKAEPV).

It belongs to the XseA family. In terms of assembly, heterooligomer composed of large and small subunits.

It is found in the cytoplasm. It carries out the reaction Exonucleolytic cleavage in either 5'- to 3'- or 3'- to 5'-direction to yield nucleoside 5'-phosphates.. In terms of biological role, bidirectionally degrades single-stranded DNA into large acid-insoluble oligonucleotides, which are then degraded further into small acid-soluble oligonucleotides. The chain is Exodeoxyribonuclease 7 large subunit from Deinococcus radiodurans (strain ATCC 13939 / DSM 20539 / JCM 16871 / CCUG 27074 / LMG 4051 / NBRC 15346 / NCIMB 9279 / VKM B-1422 / R1).